The primary structure comprises 365 residues: Cyclin-O protein B (365 aa).

A disordered region spans residues 22–64 (SGKRKRDSVYSPGDATPGDRGEGEPKCPSVGTKKRAKYSRHRK). Basic residues predominate over residues 53–64 (TKKRAKYSRHRK).

This sequence belongs to the cyclin family.

The protein resides in the cytoplasm. In terms of biological role, specifically required for generation of multiciliated cells, possibly by promoting a cell cycle state compatible with centriole amplification and maturation. Acts downstream of mcidas to promote mother centriole amplification and maturation in preparation for apical docking. The protein is Cyclin-O protein B (ccno-b) of Xenopus laevis (African clawed frog).